A 248-amino-acid polypeptide reads, in one-letter code: 2,3-bisphosphoglycerate-dependent phosphoglycerate mutase (248 aa).

Substrate-binding positions include 8–15 (RHGESQWN), 21–22 (TG), Arg60, 87–90 (ERHY), Lys98, 114–115 (RR), and 183–184 (GN). His9 serves as the catalytic Tele-phosphohistidine intermediate. The Proton donor/acceptor role is filled by Glu87.

Belongs to the phosphoglycerate mutase family. BPG-dependent PGAM subfamily. As to quaternary structure, homodimer.

The enzyme catalyses (2R)-2-phosphoglycerate = (2R)-3-phosphoglycerate. It participates in carbohydrate degradation; glycolysis; pyruvate from D-glyceraldehyde 3-phosphate: step 3/5. In terms of biological role, catalyzes the interconversion of 2-phosphoglycerate and 3-phosphoglycerate. This is 2,3-bisphosphoglycerate-dependent phosphoglycerate mutase from Alteromonas mediterranea (strain DSM 17117 / CIP 110805 / LMG 28347 / Deep ecotype).